A 176-amino-acid polypeptide reads, in one-letter code: Large ribosomal subunit protein uL10 (176 aa).

Belongs to the universal ribosomal protein uL10 family. As to quaternary structure, part of the ribosomal stalk of the 50S ribosomal subunit. The N-terminus interacts with L11 and the large rRNA to form the base of the stalk. The C-terminus forms an elongated spine to which L12 dimers bind in a sequential fashion forming a multimeric L10(L12)X complex.

Functionally, forms part of the ribosomal stalk, playing a central role in the interaction of the ribosome with GTP-bound translation factors. The sequence is that of Large ribosomal subunit protein uL10 from Natranaerobius thermophilus (strain ATCC BAA-1301 / DSM 18059 / JW/NM-WN-LF).